We begin with the raw amino-acid sequence, 236 residues long: Large ribosomal subunit protein uL1 (236 aa).

It belongs to the universal ribosomal protein uL1 family. In terms of assembly, part of the 50S ribosomal subunit.

Functionally, binds directly to 23S rRNA. The L1 stalk is quite mobile in the ribosome, and is involved in E site tRNA release. In terms of biological role, protein L1 is also a translational repressor protein, it controls the translation of the L11 operon by binding to its mRNA. In Kocuria rhizophila (strain ATCC 9341 / DSM 348 / NBRC 103217 / DC2201), this protein is Large ribosomal subunit protein uL1.